The following is a 182-amino-acid chain: Dual-action ribosomal maturation protein DarP (182 aa).

Residues 1–25 are disordered; it reads MEENLADNSEREARPSKTKRKKEMH.

The protein belongs to the DarP family.

Its subcellular location is the cytoplasm. Its function is as follows. Member of a network of 50S ribosomal subunit biogenesis factors which assembles along the 30S-50S interface, preventing incorrect 23S rRNA structures from forming. Promotes peptidyl transferase center (PTC) maturation. This Nitrosospira multiformis (strain ATCC 25196 / NCIMB 11849 / C 71) protein is Dual-action ribosomal maturation protein DarP.